The sequence spans 100 residues: Urease subunit gamma (100 aa).

The protein belongs to the urease gamma subunit family. Heterotrimer of UreA (gamma), UreB (beta) and UreC (alpha) subunits. Three heterotrimers associate to form the active enzyme.

The protein localises to the cytoplasm. The catalysed reaction is urea + 2 H2O + H(+) = hydrogencarbonate + 2 NH4(+). It participates in nitrogen metabolism; urea degradation; CO(2) and NH(3) from urea (urease route): step 1/1. This chain is Urease subunit gamma, found in Paraburkholderia xenovorans (strain LB400).